A 102-amino-acid chain; its full sequence is Small ribosomal subunit protein uS10 (102 aa).

It belongs to the universal ribosomal protein uS10 family. As to quaternary structure, part of the 30S ribosomal subunit.

In terms of biological role, involved in the binding of tRNA to the ribosomes. In Methanothrix thermoacetophila (strain DSM 6194 / JCM 14653 / NBRC 101360 / PT) (Methanosaeta thermophila), this protein is Small ribosomal subunit protein uS10.